The chain runs to 150 residues: Large ribosomal subunit protein bL9 (150 aa).

The protein belongs to the bacterial ribosomal protein bL9 family.

Its function is as follows. Binds to the 23S rRNA. The polypeptide is Large ribosomal subunit protein bL9 (Streptococcus equi subsp. zooepidemicus (strain MGCS10565)).